A 239-amino-acid polypeptide reads, in one-letter code: MGRKWANIKEKKASKDKTNSRIYAKFGIEIYVAAKSGDPDPHSNQKLRFVIERAKTYNVPKHIIDRAIEKAKGTGDETYSELRYEGFGPNGSMIIVDALTNNVNRTASDVRAAYSKNGGNMGVSGSVAYMFDNTAIFGVEGKDADELLELLMEADIDVRDILDEDGQAIIYAEPEDFHKVQEGLKAAGIEEFTVAEIEMIPQNDIQLSGEDLEKFERLIDALEDLEDVQKVYHNVELED.

This sequence belongs to the TACO1 family. YeeN subfamily.

Its subcellular location is the cytoplasm. The protein is Probable transcriptional regulatory protein lmo0369 of Listeria monocytogenes serovar 1/2a (strain ATCC BAA-679 / EGD-e).